We begin with the raw amino-acid sequence, 528 residues long: Tyrosine--tRNA ligase, cytoplasmic (528 aa).

Tyr39 serves as a coordination point for L-tyrosine. The short motif at 44–52 is the 'HIGH' region element; the sequence is TTGKPHVAY. The L-tyrosine site is built by Tyr166, Gln170, Asp173, and Gln188. The short motif at 222–226 is the 'KMSKS' region element; the sequence is KMSSS. The Nuclear localization signal motif lies at 242-247; the sequence is KKKLKK. A disordered region spans residues 335 to 364; that stretch reads KLSNDAYPGASKQKTVPKGSTKNSGPEEID. Over residues 346–358 the composition is skewed to polar residues; sequence KQKTVPKGSTKNS. The tRNA-binding domain maps to 364 to 468; sequence DPSLLDLRVG…TGSAPGERIY (105 aa).

The protein belongs to the class-I aminoacyl-tRNA synthetase family. Homodimer.

The protein localises to the cytoplasm. It is found in the nucleus. The catalysed reaction is tRNA(Tyr) + L-tyrosine + ATP = L-tyrosyl-tRNA(Tyr) + AMP + diphosphate + H(+). Catalyzes the attachment of tyrosine to tRNA(Tyr) in a two-step reaction: tyrosine is first activated by ATP to form Tyr-AMP and then transferred to the acceptor end of tRNA(Tyr). The sequence is that of Tyrosine--tRNA ligase, cytoplasmic (yars1) from Xenopus tropicalis (Western clawed frog).